The sequence spans 195 residues: 3-isopropylmalate dehydratase small subunit (195 aa).

Belongs to the LeuD family. LeuD type 1 subfamily. Heterodimer of LeuC and LeuD.

It carries out the reaction (2R,3S)-3-isopropylmalate = (2S)-2-isopropylmalate. Its pathway is amino-acid biosynthesis; L-leucine biosynthesis; L-leucine from 3-methyl-2-oxobutanoate: step 2/4. Its function is as follows. Catalyzes the isomerization between 2-isopropylmalate and 3-isopropylmalate, via the formation of 2-isopropylmaleate. This is 3-isopropylmalate dehydratase small subunit from Frankia casuarinae (strain DSM 45818 / CECT 9043 / HFP020203 / CcI3).